A 98-amino-acid chain; its full sequence is MTLIHMNVLMAFSMSLVGLLMYRSHLMSALLCLEGMMLSLFTLAALTILNSHFTLANMMPIILLVFAACEAAIGLALLVMVSNTYGTDYVQSLNLLQC.

3 helical membrane passes run 1–21 (MTLI…GLLM), 29–49 (ALLC…LTIL), and 61–81 (IILL…LVMV).

This sequence belongs to the complex I subunit 4L family. As to quaternary structure, core subunit of respiratory chain NADH dehydrogenase (Complex I) which is composed of 45 different subunits.

It localises to the mitochondrion inner membrane. It catalyses the reaction a ubiquinone + NADH + 5 H(+)(in) = a ubiquinol + NAD(+) + 4 H(+)(out). In terms of biological role, core subunit of the mitochondrial membrane respiratory chain NADH dehydrogenase (Complex I) which catalyzes electron transfer from NADH through the respiratory chain, using ubiquinone as an electron acceptor. Part of the enzyme membrane arm which is embedded in the lipid bilayer and involved in proton translocation. This is NADH-ubiquinone oxidoreductase chain 4L (MT-ND4L) from Balaenoptera borealis (Sei whale).